The primary structure comprises 346 residues: Small ribosomal subunit biogenesis GTPase RsgA (346 aa).

Residues 1-26 are disordered; sequence MAKRKLTQNQTRRIQSNNAKTLHRHK. Residues 7-20 show a composition bias toward polar residues; the sequence is TQNQTRRIQSNNAK. The 169-residue stretch at 103–271 folds into the CP-type G domain; the sequence is ENEISRPDYY…LIDSPGIREF (169 aa). Residues 159–162 and 213–221 contribute to the GTP site; these read NKVD and GQSGVGKSS. Positions 295, 300, 302, and 308 each coordinate Zn(2+).

This sequence belongs to the TRAFAC class YlqF/YawG GTPase family. RsgA subfamily. In terms of assembly, monomer. Associates with 30S ribosomal subunit, binds 16S rRNA. Requires Zn(2+) as cofactor.

The protein resides in the cytoplasm. One of several proteins that assist in the late maturation steps of the functional core of the 30S ribosomal subunit. Helps release RbfA from mature subunits. May play a role in the assembly of ribosomal proteins into the subunit. Circularly permuted GTPase that catalyzes slow GTP hydrolysis, GTPase activity is stimulated by the 30S ribosomal subunit. The protein is Small ribosomal subunit biogenesis GTPase RsgA of Haemophilus influenzae (strain 86-028NP).